The following is a 62-amino-acid chain: Chromatin protein Cren7 (62 aa).

It belongs to the Cren7 family. Monomer. Post-translationally, methylated at multiple sites, to varying extents.

The protein localises to the chromosome. It localises to the cytoplasm. In terms of biological role, a chromatin protein, binds double-stranded DNA without sequence specificity. Constrains negative DNA supercoils. The protein is Chromatin protein Cren7 of Staphylothermus marinus (strain ATCC 43588 / DSM 3639 / JCM 9404 / F1).